We begin with the raw amino-acid sequence, 103 residues long: L-rhamnose-binding lectin ELEL-1 (103 aa).

In terms of domain architecture, SUEL-type lectin spans Val13–Ser102. Intrachain disulfides connect Cys14–Cys45, Cys23–Cys101, Cys56–Cys88, and Cys69–Cys75.

Homodimer; disulfide-linked. Not glycosylated.

Its function is as follows. Rhamnose-binding lectin. Also binds alpha-D-melibiose, alpha-D-lactose, beta-D-lactose, methyl-alpha-D-galactopyranoside, methyl-beta-D--galactopyranoside and D-galactose but not D-arabinose, L-fucose, D-glucose, D-mannose, D-maltose, D-sucrose, N-acetyl-D-galactosamine, N-acetyl-D-glucosamine, N-acetyl-D-mannosamine-D-xylose or by glycoproteins orosomucoid, thyroglobulin, ovomucoid and porcine stomach mucin. Shows cation-independent hemagglutinating activity against rabbit and human erythrocytes. Agglutinates cells of Gram-positive bacterial species S.aureus but not those of Gram-negative E.coli. This Echinometra lucunter (Rock-boring urchin) protein is L-rhamnose-binding lectin ELEL-1.